The sequence spans 1027 residues: D-2-hydroxyglutarate dehydrogenase (1027 aa).

The region spanning 48-284 is the FAD-binding PCMH-type domain; the sequence is YQQLPQAILF…CEAKLNLLLI (237 aa). (R)-2-hydroxyglutarate contacts are provided by R405 and H503. Residues 665-696 enclose the 4Fe-4S ferredoxin-type domain; sequence HEVKAAMDTCLACKACASQCPIKIDVPSFRAK. [4Fe-4S] cluster-binding residues include C674, C677, C680, and C684.

It in the N-terminal section; belongs to the FAD-binding oxidoreductase/transferase type 4 family. As to quaternary structure, homotetramer. [4Fe-4S] cluster serves as cofactor. FAD is required as a cofactor.

It catalyses the reaction (R)-2-hydroxyglutarate + A = 2-oxoglutarate + AH2. Functionally, catalyzes the oxidation of D-2-hydroxyglutarate (D-2-HGA) to 2-oxoglutarate. Provides the way to recycle D-2-HGA produced during L-serine synthesis by SerA, by converting it back to 2-oxoglutarate. The physiological molecule that functions as the primary electron acceptor during D-2-HGA oxidation is unknown. This is D-2-hydroxyglutarate dehydrogenase from Haemophilus influenzae (strain ATCC 51907 / DSM 11121 / KW20 / Rd).